Consider the following 176-residue polypeptide: Inner membrane-spanning protein YciB (176 aa).

6 consecutive transmembrane segments (helical) span residues 3–23 (FLFD…WGIF), 24–44 (TATA…AFRH), 49–69 (TMLW…LVLH), 72–92 (KFIQ…LLAA), 121–141 (LAWA…VHNF), and 149–169 (FKLF…SLWL).

It belongs to the YciB family.

It localises to the cell inner membrane. Its function is as follows. Plays a role in cell envelope biogenesis, maintenance of cell envelope integrity and membrane homeostasis. This Burkholderia cenocepacia (strain ATCC BAA-245 / DSM 16553 / LMG 16656 / NCTC 13227 / J2315 / CF5610) (Burkholderia cepacia (strain J2315)) protein is Inner membrane-spanning protein YciB.